Here is a 566-residue protein sequence, read N- to C-terminus: MSDFKQKVSELLGTQIEGIGQRELLEMIEVPPNSEMGDFAFPCFRLAKTFRKAPQVIAEELVAKIQLTDDFEKVDNTGGYLNFFVNRNTYAKAVIQEVLSKGDQYGSRNLGEGKNICIDYSAPNVAKPFHVGHLRSTVIGNSLYRIYDFLGYNCIGINHLGDWGTQFGKVIVAYKNWGDKAEIEKEPINTLLALYVKFHDEAEKNPDLEDEARGWFTKMEKGDEEALSLWKWFSSETIKELKKIYALLDVHFDHYSGESFYNDKMDVVIDELNKQNLLKESQGANIVDLEEYNMPPCLVQKKDGSTLYATRDIAAAIYRKNTFNFEKCLYVTDYSQNLHFAQWFKVIELMGYDWAKDIEHISFGRVTHEGRRIQSRKGSVVLLEEVLNGAVERISEIIEEKNPNVENKEQVAKDVGIGAIVFNDLSNNRIKDISFSWDTAFSFEGETGPYVQYTHARASSVLRKAEVAITDHINAAHLTDDVTMNVIKTIEQFPQVIVDAQRKNEPSIITRHIVNIAQAFNRFYHDHPILVEDEELKMARLAVVQAVKQVLSVGLSLIGIKAPEKM.

The short motif at Pro123–His133 is the 'HIGH' region element.

This sequence belongs to the class-I aminoacyl-tRNA synthetase family. Monomer.

Its subcellular location is the cytoplasm. It catalyses the reaction tRNA(Arg) + L-arginine + ATP = L-arginyl-tRNA(Arg) + AMP + diphosphate. This is Arginine--tRNA ligase from Alkaliphilus metalliredigens (strain QYMF).